Consider the following 124-residue polypeptide: UPF0102 protein Msil_0293 (124 aa).

It belongs to the UPF0102 family.

This Methylocella silvestris (strain DSM 15510 / CIP 108128 / LMG 27833 / NCIMB 13906 / BL2) protein is UPF0102 protein Msil_0293.